Consider the following 247-residue polypeptide: Fasciclin-like arabinogalactan protein 13 (247 aa).

The N-terminal stretch at 1 to 25 (MATTPLLLLLLTAVFLSTEITAQRA) is a signal peptide. The FAS1 domain occupies 34–179 (PINITAILEK…LAVYVVDMVL (146 aa)). Residues asparagine 36, asparagine 55, asparagine 68, asparagine 141, and asparagine 150 are each glycosylated (N-linked (GlcNAc...) asparagine). The tract at residues 189-228 (KISPMAPPPKSKSPDVSDDSESSKKAAAPSESEKSGSGEM) is disordered. Residue glycine 224 is the site of GPI-anchor amidated glycine attachment. Residues 225–247 (SGEMNTGLGLGLGLVVLCLKFLL) constitute a propeptide, removed in mature form.

The protein belongs to the fasciclin-like AGP family.

The protein localises to the cell membrane. May be a cell surface adhesion protein. The polypeptide is Fasciclin-like arabinogalactan protein 13 (FLA13) (Arabidopsis thaliana (Mouse-ear cress)).